The primary structure comprises 542 residues: MKTRDSQSSDVIIIGGGATGAGIARDCALRGLRVILVERHDIATGATGRNHGLLHSGARYAVTDAESARECISENQILKRIARHCVEPTNGLFITLPEDDLSFQATFIRACEEAGISAEAIDPQQARIIEPAVNPALIGAVKVPDGTVDPFRLTAANMLDAKEHGAVILTAHEVTGLIREGATVCGVRVRNHLTGETQALHAPVVVNAAGIWGQHIAEYADLRIRMFPAKGSLLIMDHRINQHVINRCRKPSDADILVPGDTISLIGTTSLRIDYNEIDDNRVTAEEVDILLREGEKLAPVMAKTRILRAYSGVRPLVASDDDPSGRNVSRGIVLLDHAERDGLDGFITITGGKLMTYRLMAEWATDAVCRKLGNTRPCTTADLALPGSQEPAEVTLRKVISLPAPLRGSAVYRHGDRTPAWLSEGRLHRSLVCECEAVTAGEVQYAVENLNVNSLLDLRRRTRVGMGTCQGELCACRAAGLLQRFNVTTSAQSIEQLSTFLNERWKGVQPIAWGDALRESEFTRWVYQGLCGLEKEQKDAL.

10–38 (DVIIIGGGATGAGIARDCALRGLRVILVE) is an FAD binding site.

It belongs to the FAD-dependent glycerol-3-phosphate dehydrogenase family. As to quaternary structure, composed of a catalytic GlpA/B dimer and of membrane bound GlpC. The cofactor is FAD. FMN serves as cofactor.

It localises to the cell inner membrane. It carries out the reaction a quinone + sn-glycerol 3-phosphate = dihydroxyacetone phosphate + a quinol. It functions in the pathway polyol metabolism; glycerol degradation via glycerol kinase pathway; glycerone phosphate from sn-glycerol 3-phosphate (anaerobic route): step 1/1. Its function is as follows. Conversion of glycerol 3-phosphate to dihydroxyacetone. Uses fumarate or nitrate as electron acceptor. The protein is Anaerobic glycerol-3-phosphate dehydrogenase subunit A (glpA) of Escherichia coli O157:H7.